Consider the following 959-residue polypeptide: Glycine dehydrogenase (decarboxylating) (959 aa).

An N6-(pyridoxal phosphate)lysine modification is found at lysine 708.

It belongs to the GcvP family. As to quaternary structure, the glycine cleavage system is composed of four proteins: P, T, L and H. It depends on pyridoxal 5'-phosphate as a cofactor.

The enzyme catalyses N(6)-[(R)-lipoyl]-L-lysyl-[glycine-cleavage complex H protein] + glycine + H(+) = N(6)-[(R)-S(8)-aminomethyldihydrolipoyl]-L-lysyl-[glycine-cleavage complex H protein] + CO2. Functionally, the glycine cleavage system catalyzes the degradation of glycine. The P protein binds the alpha-amino group of glycine through its pyridoxal phosphate cofactor; CO(2) is released and the remaining methylamine moiety is then transferred to the lipoamide cofactor of the H protein. This Yersinia pseudotuberculosis serotype O:1b (strain IP 31758) protein is Glycine dehydrogenase (decarboxylating).